Here is a 374-residue protein sequence, read N- to C-terminus: Pectinesterase (374 aa).

A signal peptide spans 1–31; sequence MVKLLNSTRELSINALSMLNSFGDMVAQATG. 2 N-linked (GlcNAc...) asparagine glycosylation sites follow: Asn-58 and Asn-124. Substrate contacts are provided by Thr-133 and Gln-163. Residue Asp-186 is the Proton donor of the active site. A disulfide bridge connects residues Cys-200 and Cys-220. Catalysis depends on Asp-207, which acts as the Nucleophile. N-linked (GlcNAc...) asparagine glycosylation is present at Asn-230. Substrate contacts are provided by Arg-275 and Trp-277. The N-linked (GlcNAc...) asparagine glycan is linked to Asn-303.

This sequence belongs to the pectinesterase family. In terms of tissue distribution, pollen, and at much lower levels in pistils and petals.

The protein localises to the secreted. It localises to the cell wall. It carries out the reaction [(1-&gt;4)-alpha-D-galacturonosyl methyl ester](n) + n H2O = [(1-&gt;4)-alpha-D-galacturonosyl](n) + n methanol + n H(+). Its pathway is glycan metabolism; pectin degradation; 2-dehydro-3-deoxy-D-gluconate from pectin: step 1/5. In terms of biological role, may play a role in pollen germination and/or tube growth. The protein is Pectinesterase (PPE1) of Petunia integrifolia (Violet-flowered petunia).